Consider the following 187-residue polypeptide: Elongation factor P (187 aa).

It belongs to the elongation factor P family.

The protein resides in the cytoplasm. It participates in protein biosynthesis; polypeptide chain elongation. Involved in peptide bond synthesis. Stimulates efficient translation and peptide-bond synthesis on native or reconstituted 70S ribosomes in vitro. Probably functions indirectly by altering the affinity of the ribosome for aminoacyl-tRNA, thus increasing their reactivity as acceptors for peptidyl transferase. The protein is Elongation factor P of Mycobacteroides abscessus (strain ATCC 19977 / DSM 44196 / CCUG 20993 / CIP 104536 / JCM 13569 / NCTC 13031 / TMC 1543 / L948) (Mycobacterium abscessus).